A 275-amino-acid polypeptide reads, in one-letter code: 3-methyl-2-oxobutanoate hydroxymethyltransferase (275 aa).

D44 and D83 together coordinate Mg(2+). Residues 44–45, D83, and K113 each bind 3-methyl-2-oxobutanoate; that span reads DS. E115 lines the Mg(2+) pocket. Catalysis depends on E182, which acts as the Proton acceptor.

The protein belongs to the PanB family. Homodecamer; pentamer of dimers. It depends on Mg(2+) as a cofactor.

It is found in the cytoplasm. The enzyme catalyses 3-methyl-2-oxobutanoate + (6R)-5,10-methylene-5,6,7,8-tetrahydrofolate + H2O = 2-dehydropantoate + (6S)-5,6,7,8-tetrahydrofolate. The protein operates within cofactor biosynthesis; (R)-pantothenate biosynthesis; (R)-pantoate from 3-methyl-2-oxobutanoate: step 1/2. Functionally, catalyzes the reversible reaction in which hydroxymethyl group from 5,10-methylenetetrahydrofolate is transferred onto alpha-ketoisovalerate to form ketopantoate. This is 3-methyl-2-oxobutanoate hydroxymethyltransferase from Enterococcus faecalis (strain ATCC 700802 / V583).